A 307-amino-acid chain; its full sequence is Ribosomal RNA small subunit methyltransferase H (307 aa).

S-adenosyl-L-methionine contacts are provided by residues 32-34 (GGH), Asp52, Phe78, Asp99, and Gln106. The tract at residues 287–307 (KEEIESNKRSHSAKLRVAEKV) is disordered.

The protein belongs to the methyltransferase superfamily. RsmH family.

It localises to the cytoplasm. The enzyme catalyses cytidine(1402) in 16S rRNA + S-adenosyl-L-methionine = N(4)-methylcytidine(1402) in 16S rRNA + S-adenosyl-L-homocysteine + H(+). Its function is as follows. Specifically methylates the N4 position of cytidine in position 1402 (C1402) of 16S rRNA. This chain is Ribosomal RNA small subunit methyltransferase H, found in Caldicellulosiruptor bescii (strain ATCC BAA-1888 / DSM 6725 / KCTC 15123 / Z-1320) (Anaerocellum thermophilum).